A 947-amino-acid chain; its full sequence is Protocadherin alpha-4 (947 aa).

The N-terminal stretch at 1–29 is a signal peptide; sequence MEFSWGSGQESRRLLLLLLLLAAWEAGNG. Cadherin domains are found at residues 30–133, 134–242, 243–350, 351–455, 456–565, and 588–678; these read QLHY…PPVF, PATQ…APAF, DRTI…VPDL, EFKS…APAF, AQPE…APAL, and GHVV…APKA. Topologically, residues 30–697 are extracellular; the sequence is QLHYSVSEEA…GPDAALVDVN (668 aa). Residues C96 and C102 are joined by a disulfide bond. N-linked (GlcNAc...) asparagine glycosylation is found at N139, N257, and N265. N-linked (GlcNAc...) asparagine glycosylation is present at N548. A helical membrane pass occupies residues 698–718; sequence VYLIIAICAVSSLLVLTLLLY. Residues 719-947 are Cytoplasmic-facing; sequence TALRCSALPT…GNSTTDNSDQ (229 aa). PXXP repeat units lie at residues 734–737, 774–777, 796–799, 829–832, 870–873, and 888–891; these read PGKP, PSLP, PRQP, PGGP, PGNP, and PGSP. The interval 734 to 891 is 6 X 4 AA repeats of P-X-X-P; sequence PGKPTLVCSS…PDKFIIPGSP (158 aa). The interval 738-947 is required for interaction with FYN; the sequence is TLVCSSAVGS…GNSTTDNSDQ (210 aa). Disordered regions lie at residues 754-805, 828-853, and 868-947; these read RRPR…DWRY, GPGGPDQQWPTVSSATPEPEAGEVSP, and YGPG…NSDQ. Residues 906 to 920 are compositionally biased toward basic and acidic residues; sequence DKSDFITFGKKEETK.

Forms homodimers in trans (molecules expressed by two different cells). Forms promiscuous heterodimers in cis (at the plasma membrane of the same cell) with other protocadherins. Interacts with FYN.

It is found in the cell membrane. Calcium-dependent cell-adhesion protein involved in cells self-recognition and non-self discrimination. Thereby, it is involved in the establishment and maintenance of specific neuronal connections in the brain. In Homo sapiens (Human), this protein is Protocadherin alpha-4.